A 137-amino-acid polypeptide reads, in one-letter code: Small ribosomal subunit protein uS12 (137 aa).

The interval 33–57 is disordered; the sequence is KVQTNVSSPQKRGVATRVGTMTPKK. Residue aspartate 102 is modified to 3-methylthioaspartic acid.

This sequence belongs to the universal ribosomal protein uS12 family. Part of the 30S ribosomal subunit. Contacts proteins S8 and S17. May interact with IF1 in the 30S initiation complex.

Its function is as follows. With S4 and S5 plays an important role in translational accuracy. Functionally, interacts with and stabilizes bases of the 16S rRNA that are involved in tRNA selection in the A site and with the mRNA backbone. Located at the interface of the 30S and 50S subunits, it traverses the body of the 30S subunit contacting proteins on the other side and probably holding the rRNA structure together. The combined cluster of proteins S8, S12 and S17 appears to hold together the shoulder and platform of the 30S subunit. The polypeptide is Small ribosomal subunit protein uS12 (Streptococcus thermophilus (strain CNRZ 1066)).